Reading from the N-terminus, the 360-residue chain is Probable nuclear hormone receptor HR38 (360 aa).

The tract at residues Gly-1 to Ser-21 is disordered. The nuclear receptor DNA-binding region spans Ser-23–Thr-98. NR C4-type zinc fingers lie at residues Cys-26 to Cys-46 and Cys-62 to Cys-86. In terms of domain architecture, NR LBD spans Pro-122–Ser-357.

This sequence belongs to the nuclear hormone receptor family. NR4 subfamily. In terms of assembly, forms a heterodimer with USP.

It localises to the nucleus. The polypeptide is Probable nuclear hormone receptor HR38 (HR38) (Bombyx mori (Silk moth)).